Consider the following 229-residue polypeptide: Demethylmenaquinone methyltransferase (229 aa).

S-adenosyl-L-methionine is bound by residues Thr-58, Asp-78, and Asp-100–Ala-101.

This sequence belongs to the class I-like SAM-binding methyltransferase superfamily. MenG/UbiE family.

It carries out the reaction a 2-demethylmenaquinol + S-adenosyl-L-methionine = a menaquinol + S-adenosyl-L-homocysteine + H(+). It functions in the pathway quinol/quinone metabolism; menaquinone biosynthesis; menaquinol from 1,4-dihydroxy-2-naphthoate: step 2/2. Methyltransferase required for the conversion of demethylmenaquinol (DMKH2) to menaquinol (MKH2). The polypeptide is Demethylmenaquinone methyltransferase (Thermotoga maritima (strain ATCC 43589 / DSM 3109 / JCM 10099 / NBRC 100826 / MSB8)).